A 2723-amino-acid chain; its full sequence is MADEEAEQERLSCGEGGCVAELQRLGERLQELELQLRESRVPAVEAATDYCQQLCQTLLEYAEKWKTSEDPLPLLEVYTVAIQSYVKARPYLTSECENVALVLERLALSCVELLLCLPVELSDKQWEQFQTLVQVAHEKLMENGSCELHFLATLAQETGVWKNPVLCTILSQEPLDKDKVNEFLAFEGPILLDMRIKHLIKTNQLSQATALAKLCSDHPEIGIKGSFKQTYLVCLCTSSPNGKLIEEISEVDCKDALEMICNLESEGDEKSALVLCTAFLSRQLQQGDMYCAWELTLFWSKLQQRVEPSIQVYLERCRQLSLLTKTVYHIFFLIKVINSETEGAGLATCIELCVKALRLESTENTEVKISICKTISCLLPDDLEVKRACQLSEFLIEPTVDAYYAVEMLYNQPDQKYDEENLPIPNSLRCELLLVLKTQWPFDPEFWDWKTLKRQCLALMGEEASIVSSIDELNDSEVYEKVVDYQEESKETSMNGLSGGVGANSGLLKDIGDEKQKKREIKQLRERGFISARFRNWQAYMQYCVLCDKEFLGHRIVRHAQKHYKDGIYSCPICAKNFNSKETFVPHVTLHVKQSSKERLAAMKPLRRLGRPPKITTTNENQKTNTVAKQEQRPIKKNSLYSTDFIVFNDNDGSDDENDDKDKSYEPEVIPVQKPVPVNEFNCPVTFCKKGFKYFKNLIAHVKGHKDNEDAKRFLEMQSKKVICQYCRRHFVSVTHLNDHLQMHCGSKPYICIQMKCKAGFNSYAELLTHRKEHQVFRAKCMFPKCGRIFSEAYLLYDHEAQHYNTYTCKFTGCGKVYRSQGELEKHLDDHSTPPEKVLPPEAQLNSSGDSIQPSEVNQNTAENIEKERSMLPSENNIENSLLADRSDAWDKSKAESAVTKQDQISASELRQANGPLSNGLENPATTPLLQSSEVAVSIKVSLNQGIEDNFGKQENSTVEGSGEALVTDLHTPVEDTCNDLCHPGFQERKEQDCFNDAHVTQNSLVNSETLKIGDLTPQNLERQVNNLMTFSVQNQAAFQNNLPTSKFECGDNVKTSSNLYNLPLKTLESIAFVPPQSDLSNSLGTPSVPPKAPVQKFSCQVEGCTRTYNSSQSIGKHMKTAHPDQYAAFKMQRKSKKGQKANNLNTPNNGKFVYFLPSPVNSSNPFFTSQTKANGNPACSAQLQHVSPPIFPAHLASVSTPLLSSMESVINPNITSQDKNEQGGMLCSQMENLPSTALPAQMEDLTKTVLPLNIDSGSDPFLPLPAESSSMSLFPSPADSGTNSVFSQLENNTNHYSSQIEGNTNSSFLKGGNGENAVFPSQVNVANNFSSTNAQQSAPEKVKKDRGRGPNGKERKPKHNKRAKWPAIIRDGKFICSRCYRAFTNPRSLGGHLSKRSYCKPLDGAEIAQELLQSNGQPSLLASMILSTNAVNLQQPQQSTFNPEACFKDPSFLQLLAENRSPAFLPNTFPRSGVTNFNTSVSQEGSEIIKQALETAGIPSTFEGAEMLSHVSTGCVSDASQVNATVMPNPTVPPLLHTVCHPNTLLTNQNRTSNSKTSSIEECSSLPVFPTNDLLLKTVENGLCSSSFPNSGGPSQNFTSNSSRVSVISGPQNTRSSHLNKKGNSASKRRKKVAPPLIAPNASQNLVTSDLTTMGLIAKSVEIPTTNLHSNVIPTCEPQSLVENLTQKLNNVNNQLFMTDVKENFKTSLESHTVLAPLTLKTENGDSQMMALNSCTTSINSDLQISEDNVIQNFEKTLEIIKTAMNSQILEVKSGSQGAGETSQNAQINYNIQLPSVNTVQNNKLPDSSPFSSFISVMPTKSNIPQSEVSHKEDQIQEILEGLQKLKLENDLSTPASQCVLINTSVTLTPTPVKSTADITVIQPVSEMINIQFNDKVNKPFVCQNQGCNYSAMTKDALFKHYGKIHQYTPEMILEIKKNQLKFAPFKCVVPTCTKTFTRNSNLRAHCQLVHHFTTEEMVKLKIKRPYGRKSQSENVPASRSTQVKKQLAMTEENKKESQPALELRAETQNTHSNVAVIPEKQLVEKKSPDKTESSLQVITVTSEQCNTNALTNTQTKGRKIRRHKKEKEEKKRKKPVSQSLEFPTRYSPYRPYRCVHQGCFAAFTIQQNLILHYQAVHKSDLPAFSAEVEEESEAGKESEETETKQTLKEFRCQVSDCSRIFQAITGLIQHYMKLHEMTPEEIESMTASVDVGKFPCDQLECKSSFTTYLNYVVHLEADHGIGLRASKTEEDGVYKCDCEGCDRIYATRSNLLRHIFNKHNDKHKAHLIRPRRLTPGQENMSSKANQEKSKSKHRGTKHSRCGKEGIKMPKTKRKKKNNLENKNAKIVQIEENKPYSLKRGKHVYSIKARNDALSECTSRFVTQYPCMIKGCTSVVTSESNIIRHYKCHKLSKAFTSQHRNLLIVFKRCCNSQVKETSEQEGAKNDVKDSDTCVSESNDNSRTTATVSQKEVEKNEKDEMDELTELFITKLINEDSTSVETQANTSSNVSNDFQEDNLCQSERQKASNLKRVNKEKNVSQNKKRKVEKAEPASAAELSSVRKEEETAVAIQTIEEHPASFDWSSFKPMGFEVSFLKFLEESAVKQKKNTDKDHPNTGNKKGSHSNSRKNIDKTAVTSGNHVCPCKESETFVQFANPSQLQCSDNVKIVLDKNLKDCTELVLKQLQEMKPTVSLKKLEVHSNDPDMSVMKDISIGKATGRGQY.

A C2H2-type 1 zinc finger spans residues 569 to 591; the sequence is YSCPICAKNFNSKETFVPHVTLH. Positions 608-633 are disordered; it reads RLGRPPKITTTNENQKTNTVAKQEQR. Positions 615 to 629 are enriched in polar residues; sequence ITTTNENQKTNTVAK. Ser-654 is subject to Phosphoserine. C2H2-type zinc fingers lie at residues 681–705, 722–744, 750–774, 779–803, and 807–831; these read FNCP…VKGH, VICQ…LQMH, YICI…RKEH, AKCM…EAQH, and YTCK…LDDH. Positions 825 to 834 are enriched in basic and acidic residues; sequence EKHLDDHSTP. The segment at 825-860 is disordered; it reads EKHLDDHSTPPEKVLPPEAQLNSSGDSIQPSEVNQN. Residues 844 to 860 are compositionally biased toward polar residues; it reads QLNSSGDSIQPSEVNQN. The C2H2-type 7 zinc-finger motif lies at 1098–1123; it reads FSCQVEGCTRTYNSSQSIGKHMKTAH. Position 1117 is an N6-acetyllysine (Lys-1117). Ser-1159 is subject to Phosphoserine. The tract at residues 1331–1364 is disordered; sequence SSTNAQQSAPEKVKKDRGRGPNGKERKPKHNKRA. Residues 1341-1355 are compositionally biased toward basic and acidic residues; it reads EKVKKDRGRGPNGKE. The C2H2-type 8; degenerate zinc finger occupies 1375-1397; sequence FICSRCYRAFTNPRSLGGHLSKR. The span at 1588 to 1627 shows a compositional bias: polar residues; that stretch reads SFPNSGGPSQNFTSNSSRVSVISGPQNTRSSHLNKKGNSA. The disordered stretch occupies residues 1588–1634; sequence SFPNSGGPSQNFTSNSSRVSVISGPQNTRSSHLNKKGNSASKRRKKV. Residues 1827–1854 adopt a coiled-coil conformation; sequence QSEVSHKEDQIQEILEGLQKLKLENDLS. 2 consecutive C2H2-type zinc fingers follow at residues 1902-1927 and 1947-1972; these read FVCQ…GKIH and FKCV…QLVH. Residues 1986 to 2023 are disordered; the sequence is RPYGRKSQSENVPASRSTQVKKQLAMTEENKKESQPAL. The segment covering 1994-2006 has biased composition (polar residues); the sequence is SENVPASRSTQVK. Lys-2042 carries the N6-acetyllysine modification. A disordered region spans residues 2074 to 2103; the sequence is NTQTKGRKIRRHKKEKEEKKRKKPVSQSLE. A compositionally biased stretch (basic residues) spans 2078-2097; that stretch reads KGRKIRRHKKEKEEKKRKKP. 4 C2H2-type zinc fingers span residues 2114-2139, 2172-2197, 2216-2241, and 2256-2281; these read YRCV…QAVH, FRCQ…MKLH, FPCD…EADH, and YKCD…FNKH. Composition is skewed to basic residues over residues 2285–2294 and 2312–2322; these read HKAHLIRPRR and KSKHRGTKHSR. Residues 2285–2345 are disordered; sequence HKAHLIRPRR…KKKNNLENKN (61 aa). The segment at 2386 to 2410 adopts a C2H2-type 15 zinc-finger fold; it reads YPCMIKGCTSVVTSESNIIRHYKCH. Over residues 2441 to 2452 the composition is skewed to basic and acidic residues; the sequence is QEGAKNDVKDSD. Disordered stretches follow at residues 2441 to 2480, 2530 to 2564, and 2606 to 2631; these read QEGA…EKDE, LKRV…VRKE, and QKKN…RKNI. Residues 2453–2470 show a composition bias toward polar residues; the sequence is TCVSESNDNSRTTATVSQ. Basic and acidic residues predominate over residues 2606 to 2615; sequence QKKNTDKDHP.

Belongs to the krueppel C2H2-type zinc-finger protein family.

Its subcellular location is the nucleus. May be involved in transcriptional regulation. This chain is Zinc finger protein 292 (ZNF292), found in Homo sapiens (Human).